Consider the following 56-residue polypeptide: Small ribosomal subunit protein uS14 (56 aa).

Zn(2+)-binding residues include cysteine 21, cysteine 24, cysteine 39, and cysteine 42.

This sequence belongs to the universal ribosomal protein uS14 family. As to quaternary structure, component of the 40S small ribosomal subunit. The cofactor is Zn(2+).

It localises to the cytoplasm. The protein localises to the cytosol. It is found in the rough endoplasmic reticulum. This is Small ribosomal subunit protein uS14 (RpS29) from Scarabaeus laticollis (Scarab dung beetle).